We begin with the raw amino-acid sequence, 668 residues long: DNA ligase (668 aa).

Residues 37–41 (DAVYD), 86–87 (SM), and Glu116 contribute to the NAD(+) site. Residue Lys118 is the N6-AMP-lysine intermediate of the active site. Arg139, Glu173, Lys288, and Lys312 together coordinate NAD(+). Cys406, Cys409, Cys424, and Cys429 together coordinate Zn(2+). A BRCT domain is found at 590-668 (APDNFFKEKT…EQEAIAKIEK (79 aa)).

The protein belongs to the NAD-dependent DNA ligase family. LigA subfamily. It depends on Mg(2+) as a cofactor. The cofactor is Mn(2+).

It carries out the reaction NAD(+) + (deoxyribonucleotide)n-3'-hydroxyl + 5'-phospho-(deoxyribonucleotide)m = (deoxyribonucleotide)n+m + AMP + beta-nicotinamide D-nucleotide.. Its function is as follows. DNA ligase that catalyzes the formation of phosphodiester linkages between 5'-phosphoryl and 3'-hydroxyl groups in double-stranded DNA using NAD as a coenzyme and as the energy source for the reaction. It is essential for DNA replication and repair of damaged DNA. The polypeptide is DNA ligase (Lactobacillus johnsonii (strain CNCM I-12250 / La1 / NCC 533)).